A 686-amino-acid polypeptide reads, in one-letter code: ATP-dependent zinc metalloprotease FtsH 2 (686 aa).

The Cytoplasmic portion of the chain corresponds to 1 to 11 (MKKNIKDIFKN). Residues 12–32 (FNIFWFCFIFLLLSLLYCLIM) form a helical membrane-spanning segment. At 33-178 (MEISHQHDNN…LQRIPYQPYF (146 aa)) the chain is on the extracellular side. Residues 179 to 199 (GFAPFISAVNICILIIIFYFI) form a helical membrane-spanning segment. Over 200-686 (YNSIEKTSAQ…QKSEKEDCNK (487 aa)) the chain is Cytoplasmic. 272–279 (GPPGVGKT) provides a ligand contact to ATP. Residue H493 coordinates Zn(2+). The active site involves E494. H497 and D569 together coordinate Zn(2+).

In the central section; belongs to the AAA ATPase family. It in the C-terminal section; belongs to the peptidase M41 family. As to quaternary structure, homohexamer. Zn(2+) is required as a cofactor.

It is found in the cell membrane. Its function is as follows. Acts as a processive, ATP-dependent zinc metallopeptidase for both cytoplasmic and membrane proteins. Plays a role in the quality control of integral membrane proteins. In Phytoplasma mali (strain AT), this protein is ATP-dependent zinc metalloprotease FtsH 2.